Reading from the N-terminus, the 346-residue chain is UPF0425 pyridoxal phosphate-dependent protein MK0620 (346 aa).

K206 is subject to N6-(pyridoxal phosphate)lysine.

It depends on pyridoxal 5'-phosphate as a cofactor.

In Methanopyrus kandleri (strain AV19 / DSM 6324 / JCM 9639 / NBRC 100938), this protein is UPF0425 pyridoxal phosphate-dependent protein MK0620.